We begin with the raw amino-acid sequence, 32 residues long: Cruzioseptin-9 (32 aa).

Glutamine 29 is subject to Glutamine amide. A propeptide spanning residues glutamate 31–glutamine 32 is cleaved from the precursor.

As to expression, expressed by the skin glands.

It is found in the secreted. In terms of biological role, has antimicrobial activity. The sequence is that of Cruzioseptin-9 from Cruziohyla calcarifer (Splendid leaf frog).